Reading from the N-terminus, the 679-residue chain is Stress-70 protein, mitochondrial (679 aa).

Residues 1-46 (MISASRAAAARLVGTAASRSPAAARPQDGWNGLSHEAFRFVSRRDY) constitute a mitochondrion transit peptide. Residues 1-432 (MISASRAAAA…IQGGVLAGDV (432 aa)) are interaction with NFS1. ADP contacts are provided by Thr63 and Asn64. Residues 63 to 431 (TNSCVAVMEG…AIQGGVLAGD (369 aa)) form a nucleotide-binding domain (NBD) region. An N6-acetyllysine modification is found at Lys76. At Thr87 the chain carries Phosphothreonine. N6-acetyllysine; alternate is present on residues Lys135 and Lys138. Lys135 and Lys138 each carry N6-succinyllysine; alternate. Lys143 carries the N6-acetyllysine modification. Lys206 carries the N6-acetyllysine; alternate modification. An N6-succinyllysine; alternate modification is found at Lys206. Lys206 is subject to N6-malonyllysine; alternate. An N6-acetyllysine mark is found at Lys234 and Lys288. The residue at position 300 (Lys300) is an N6-acetyllysine; alternate. An N6-succinyllysine; alternate modification is found at Lys300. Residues Glu313, Lys316, and Ser320 each coordinate ADP. Lys360 is modified (N6-acetyllysine; alternate). Position 360 is an N6-succinyllysine; alternate (Lys360). Lys368 bears the N6-succinyllysine mark. ADP contacts are provided by Gly388 and Arg391. Lys394 is modified (N6-succinyllysine). At Ser408 the chain carries Phosphoserine. The tract at residues 432–441 (VTDVLLLDVT) is interdomain linker. The tract at residues 432–679 (VTDVLLLDVT…QKEDQKEEKQ (248 aa)) is interaction with FXN and ISCU. The interval 442-679 (PLSLGIETLG…QKEDQKEEKQ (238 aa)) is substrate-binding domain (SBD). Arg513 carries the omega-N-methylarginine modification. N6-acetyllysine; alternate occurs at positions 567 and 600. Lys567 and Lys600 each carry N6-succinyllysine; alternate. N6-succinyllysine is present on Lys610. Lys612 carries the post-translational modification N6-acetyllysine. N6-acetyllysine; alternate is present on Lys646. Lys646 carries the post-translational modification N6-succinyllysine; alternate. Positions 656–679 (ASEREGSGSSGTGEQKEDQKEEKQ) are disordered. Residues 669–679 (EQKEDQKEEKQ) are compositionally biased toward basic and acidic residues.

It belongs to the heat shock protein 70 family. Interacts strongly with the intermediate form of FXN and weakly with its mature form. Interacts with HSCB. Associates with the mitochondrial contact site and cristae organizing system (MICOS) complex, composed of at least MICOS10/MIC10, CHCHD3/MIC19, CHCHD6/MIC25, APOOL/MIC27, IMMT/MIC60, APOO/MIC23/MIC26 and QIL1/MIC13. This complex was also known under the names MINOS or MitOS complex. The MICOS complex associates with mitochondrial outer membrane proteins SAMM50, MTX1, MTX2 and DNAJC11, mitochondrial inner membrane protein TMEM11 and with HSPA9. Interacts with DNLZ, the interaction is required to prevent self-aggregation. Interacts with TESPA1. Interacts with PDPN. Interacts with NFU1, NFS1 and ISCU. Interacts with TP53; the interaction promotes TP53 degradation. Interacts (via SBD domain) with UBXN2A; the interaction with UBXN2A inhibits HSPA9/MOT-2 interaction with and degradation of TP53, thereby promotes TP53 translocation to the nucleus. Interacts with ITPR1 AND VDAC1; this interaction couples ITPR1 to VDAC1. Component of the TIM23 mitochondrial inner membrane pre-sequence translocase complex.

It localises to the mitochondrion. The protein resides in the nucleus. It is found in the nucleolus. Its subcellular location is the cytoplasm. The protein localises to the mitochondrion matrix. It carries out the reaction ATP + H2O = ADP + phosphate + H(+). With respect to regulation, the chaperone activity is regulated by ATP-induced allosteric coupling of the nucleotide-binding (NBD) and substrate-binding (SBD) domains. ATP binding in the NBD leads to a conformational change in the NBD, which is transferred through the interdomain linker (IDL) to the substrate-binding domain (SBD). This elicits a reduced substrate affinity and a faster substrate exchange rate. Upon hydrolysis of ATP to ADP, the protein undergoes a conformational change that increases its affinity for substrate proteins. It cycles through repeated phases of ATP hydrolysis and nucleotide exchange, facilitating repeated cycles of substrate binding and release. Functions in collaboration with co-chaperones. Functions with the co-chaperone, DNLZ, to maintain solubility and regulate ATP hydrolysis. Nucleotide exchange factors, GRPEL1 and GRPEL2, accelerate nucleotide exchange. Its function is as follows. Mitochondrial chaperone that plays a key role in mitochondrial protein import, folding, and assembly. Plays an essential role in the protein quality control system, the correct folding of proteins, the re-folding of misfolded proteins, and the targeting of proteins for subsequent degradation. These processes are achieved through cycles of ATP binding, ATP hydrolysis, and ADP release, mediated by co-chaperones. In mitochondria, it associates with the TIM (translocase of the inner membrane) protein complex to assist in the import and folding of mitochondrial proteins. Plays an important role in mitochondrial iron-sulfur cluster (ISC) biogenesis. Interacts with and stabilizes ISC cluster assembly proteins FXN, NFU1, NFS1 and ISCU. Regulates erythropoiesis via stabilization of ISC assembly. Regulates mitochondrial calcium-dependent apoptosis by coupling two calcium channels, ITPR1 and VDAC1, at the mitochondria-associated endoplasmic reticulum (ER) membrane to facilitate calcium transport from the ER lumen to the mitochondria intermembrane space, providing calcium for the downstream calcium channel MCU, which releases it into the mitochondrial matrix. Although primarily located in the mitochondria, it is also found in other cellular compartments. In the cytosol, it associates with proteins involved in signaling, apoptosis, or senescence. It may play a role in cell cycle regulation via its interaction with and promotion of degradation of TP53. May play a role in the control of cell proliferation and cellular aging. Protects against reactive oxygen species (ROS). Extracellular HSPA9 plays a cytoprotective role by preventing cell lysis following immune attack by the membrane attack complex by disrupting formation of the complex. The protein is Stress-70 protein, mitochondrial of Mus musculus (Mouse).